The primary structure comprises 200 residues: Recombination protein RecR (200 aa).

A C4-type zinc finger spans residues 57–72; sequence CSECRTFTEEDTCAIC. Residues 81 to 176 form the Toprim domain; the sequence is GEMCIVESPA…PASRIAHGVP (96 aa).

Belongs to the RecR family.

In terms of biological role, may play a role in DNA repair. It seems to be involved in an RecBC-independent recombinational process of DNA repair. It may act with RecF and RecO. The polypeptide is Recombination protein RecR (Aliivibrio fischeri (strain ATCC 700601 / ES114) (Vibrio fischeri)).